A 707-amino-acid polypeptide reads, in one-letter code: Heat shock protein hsp88 (707 aa).

Over residues 662-692 (EAEKAAKKAEEEARKAKEAAEKAAQEGAKDD) the composition is skewed to basic and acidic residues. Residues 662 to 707 (EAEKAAKKAEEEARKAKEAAEKAAQEGAKDDEMTDADAPKPVVEEA) form a disordered region.

Belongs to the heat shock protein 70 family. Binds hsp30 independent of temperature or substrate. The N-terminus is blocked.

Its subcellular location is the cytoplasm. The sequence is that of Heat shock protein hsp88 (hsp88) from Neurospora crassa (strain ATCC 24698 / 74-OR23-1A / CBS 708.71 / DSM 1257 / FGSC 987).